The sequence spans 141 residues: Transcriptional regulator MraZ (141 aa).

2 consecutive SpoVT-AbrB domains span residues 5 to 47 (EYNH…PNEE) and 75 to 118 (AADC…SKER).

Belongs to the MraZ family. In terms of assembly, forms oligomers.

The protein resides in the cytoplasm. It is found in the nucleoid. This chain is Transcriptional regulator MraZ, found in Lachnoclostridium phytofermentans (strain ATCC 700394 / DSM 18823 / ISDg) (Clostridium phytofermentans).